Here is a 105-residue protein sequence, read N- to C-terminus: Ig lambda chain C region (105 aa).

Residues 6–100 (PSVILFPPSS…EGHTVEKSLA (95 aa)) form the Ig-like domain. C27 and C86 are oxidised to a cystine.

The polypeptide is Ig lambda chain C region (Oryctolagus cuniculus (Rabbit)).